The following is a 104-amino-acid chain: L-rhamnose mutarotase (104 aa).

Residue Y18 participates in substrate binding. H22 acts as the Proton donor in catalysis. Substrate contacts are provided by residues Y41 and 76–77 (WW).

The protein belongs to the rhamnose mutarotase family. Homodimer.

It is found in the cytoplasm. The catalysed reaction is alpha-L-rhamnose = beta-L-rhamnose. It functions in the pathway carbohydrate metabolism; L-rhamnose metabolism. Its function is as follows. Involved in the anomeric conversion of L-rhamnose. The sequence is that of L-rhamnose mutarotase from Listeria monocytogenes serotype 4b (strain F2365).